A 260-amino-acid chain; its full sequence is NAD-capped RNA hydrolase NudC (260 aa).

R74 is a binding site for substrate. The Zn(2+) site is built by C103, C106, C121, and C124. Y129 lines the substrate pocket. Residues 130–253 enclose the Nudix hydrolase domain; it reads PRIFPCIIVA…TIARALIEQT (124 aa). A163, E179, and E183 together coordinate a divalent metal cation. Residues 164–185 carry the Nudix box motif; the sequence is GFLEAGETLEDCVAREVHEETG. 197-204 is a substrate binding site; sequence QPWAFPSS. E224 is a binding site for a divalent metal cation. A246 is a binding site for substrate.

This sequence belongs to the Nudix hydrolase family. NudC subfamily. As to quaternary structure, homodimer. Mg(2+) serves as cofactor. It depends on Mn(2+) as a cofactor. The cofactor is Zn(2+).

The catalysed reaction is a 5'-end NAD(+)-phospho-ribonucleoside in mRNA + H2O = a 5'-end phospho-adenosine-phospho-ribonucleoside in mRNA + beta-nicotinamide D-ribonucleotide + 2 H(+). The enzyme catalyses NAD(+) + H2O = beta-nicotinamide D-ribonucleotide + AMP + 2 H(+). It carries out the reaction NADH + H2O = reduced beta-nicotinamide D-ribonucleotide + AMP + 2 H(+). Functionally, mRNA decapping enzyme that specifically removes the nicotinamide adenine dinucleotide (NAD) cap from a subset of mRNAs by hydrolyzing the diphosphate linkage to produce nicotinamide mononucleotide (NMN) and 5' monophosphate mRNA. The NAD-cap is present at the 5'-end of some mRNAs and stabilizes RNA against 5'-processing. Has preference for mRNAs with a 5'-end purine. Catalyzes the hydrolysis of a broad range of dinucleotide pyrophosphates. The polypeptide is NAD-capped RNA hydrolase NudC (Vibrio parahaemolyticus serotype O3:K6 (strain RIMD 2210633)).